The primary structure comprises 622 residues: Golgin subfamily A member 6-like protein 7 (622 aa).

Disordered stretches follow at residues M1–L82, R251–V496, and E511–R580. 6 stretches are compositionally biased toward basic and acidic residues: residues S57–A74, R251–E275, E283–E332, E339–E367, E374–E388, and E395–E420. The stretch at K100–M534 forms a coiled coil. The segment covering Q477–E489 has biased composition (acidic residues). 2 stretches are compositionally biased toward basic and acidic residues: residues E511–S546 and P567–R580.

This sequence belongs to the GOLGA6 family.

The polypeptide is Golgin subfamily A member 6-like protein 7 (Homo sapiens (Human)).